A 155-amino-acid polypeptide reads, in one-letter code: MIEKKVVSQLIEEKLASSSNYLVDVVIKPGNLIVVEIDNDEAVSIDDCAELSRYLEEHLDRDVEDYELEVGSAGITSPFKVLRQYVKNIGNEVEMLLKNGSKLTGVLKSADENGVVVSVEKKVKPEGAKRKVTVVEDESYTFDEIKYTKYLIRFK.

It belongs to the RimP family.

The protein localises to the cytoplasm. Required for maturation of 30S ribosomal subunits. This chain is Ribosome maturation factor RimP, found in Parabacteroides distasonis (strain ATCC 8503 / DSM 20701 / CIP 104284 / JCM 5825 / NCTC 11152).